A 1023-amino-acid chain; its full sequence is 2-oxoglutarate dehydrogenase complex component E1 (1023 aa).

The N-terminal 40 residues, 1-40, are a transit peptide targeting the mitochondrion; it reads MFHLRTCAAKLRPLTASQTVKTFSQNRPAAARTFQQIRCY. At lysine 74 the chain carries N6-succinyllysine. Serine 100 carries the phosphoserine modification. Ca(2+) contacts are provided by histidine 143, aspartate 156, and aspartate 158. Arginine 312 is a thiamine diphosphate binding site. N6-acetyllysine is present on lysine 401. The thiamine diphosphate site is built by aspartate 411, asparagine 444, and isoleucine 446. Mg(2+) contacts are provided by aspartate 411, asparagine 444, and isoleucine 446. Lysine 534 participates in a covalent cross-link: Glycyl lysine isopeptide (Lys-Gly) (interchain with G-Cter in ubiquitin). N6-succinyllysine is present on lysine 564. Thiamine diphosphate is bound at residue glutamine 676. At lysine 970 the chain carries N6-acetyllysine.

The protein belongs to the alpha-ketoglutarate dehydrogenase family. As to quaternary structure, homodimer. The 2-oxoglutarate dehydrogenase complex is composed of OGDH (2-oxoglutarate dehydrogenase; E1), DLST (dihydrolipoamide succinyltransferase; E2), DLD (dihydrolipoamide dehydrogenase; E3), and the assembly factor KGD4. It contains multiple copies of the three enzymatic components (E1, E2 and E3). In the nucleus, the 2-oxoglutarate dehydrogenase complex associates with KAT2A. Interacts with ABHD11; this interaction maintains the functional lipoylation of the 2-oxoglutarate dehydrogenase complex. The cofactor is thiamine diphosphate. Requires Mg(2+) as cofactor.

It is found in the mitochondrion. Its subcellular location is the nucleus. It carries out the reaction N(6)-[(R)-lipoyl]-L-lysyl-[protein] + 2-oxoglutarate + H(+) = N(6)-[(R)-S(8)-succinyldihydrolipoyl]-L-lysyl-[protein] + CO2. Calcium ions and ADP stimulate, whereas ATP and NADH reduce catalytic activity. Functionally, 2-oxoglutarate dehydrogenase (E1o) component of the 2-oxoglutarate dehydrogenase complex (OGDHC). Participates in the first step, rate limiting for the overall conversion of 2-oxoglutarate to succinyl-CoA and CO(2) catalyzed by the whole OGDHC. Catalyzes the irreversible decarboxylation of 2-oxoglutarate (alpha-ketoglutarate) via the thiamine diphosphate (ThDP) cofactor and subsequent transfer of the decarboxylated acyl intermediate on an oxidized dihydrolipoyl group that is covalently amidated to the E2 enzyme (dihydrolipoyllysine-residue succinyltransferase or DLST). Plays a key role in the Krebs (citric acid) cycle, which is a common pathway for oxidation of fuel molecules, including carbohydrates, fatty acids, and amino acids. Can catalyze the decarboxylation of 2-oxoadipate in vitro, but at a much lower rate than 2-oxoglutarate. Mainly active in the mitochondrion. A fraction of the 2-oxoglutarate dehydrogenase complex also localizes in the nucleus and is required for lysine succinylation of histones: associates with KAT2A on chromatin and provides succinyl-CoA to histone succinyltransferase KAT2A. The protein is 2-oxoglutarate dehydrogenase complex component E1 of Homo sapiens (Human).